Consider the following 411-residue polypeptide: Lissencephaly-1 homolog (411 aa).

One can recognise a LisH domain in the interval 9–41 (QREELNQAIADYLGSNGYADSLEAFRKEADLST). Residues 56–83 (TSVIRLQKKVMELEAKLTEAEKEVIEGA) adopt a coiled-coil conformation. 7 WD repeats span residues 106 to 147 (GHRA…RSLK), 148 to 187 (GHTD…ECVK), 191 to 230 (GHDH…CVKT), 233 to 272 (GHRE…CKVE), 275 to 334 (DHEH…CLFT), 337 to 376 (GHDN…CMKT), and 379 to 411 (AHQH…WECR).

It belongs to the WD repeat LIS1/nudF family.

The protein resides in the cytoplasm. The protein localises to the cytoskeleton. It is found in the microtubule organizing center. It localises to the centrosome. In terms of biological role, positively regulates the activity of the minus-end directed microtubule motor protein dynein. May enhance dynein-mediated microtubule sliding by targeting dynein to the microtubule plus end. Required for several dynein- and microtubule-dependent processes. The protein is Lissencephaly-1 homolog of Drosophila ananassae (Fruit fly).